A 305-amino-acid polypeptide reads, in one-letter code: Putative lipid kinase SAR0780 (305 aa).

Residues Asn-3–Tyr-139 form the DAGKc domain. Residues Ser-44, Gly-74 to Glu-80, and Thr-101 contribute to the ATP site. Mg(2+) is bound by residues Ser-220, Asp-223, and Glu-225. The active-site Proton acceptor is the Glu-281.

It belongs to the diacylglycerol/lipid kinase family. It depends on Mg(2+) as a cofactor.

Functionally, may catalyze the ATP-dependent phosphorylation of lipids other than diacylglycerol (DAG). In fact, is not able to exhibit diacylglycerol kinase activity in vitro. This chain is Putative lipid kinase SAR0780, found in Staphylococcus aureus (strain MRSA252).